A 45-amino-acid chain; its full sequence is Photosystem II reaction center protein K (45 aa).

The propeptide occupies 1-8 (MLMSLFLA). The chain crosses the membrane as a helical span at residues 23–43 (ILPIIPLFFLLLAFVWQAAIG).

Belongs to the PsbK family. PSII is composed of 1 copy each of membrane proteins PsbA, PsbB, PsbC, PsbD, PsbE, PsbF, PsbH, PsbI, PsbJ, PsbK, PsbL, PsbM, PsbT, PsbX, PsbY, PsbZ, Psb30/Ycf12, at least 3 peripheral proteins of the oxygen-evolving complex and a large number of cofactors. It forms dimeric complexes.

Its subcellular location is the plastid. It localises to the cyanelle thylakoid membrane. In terms of biological role, one of the components of the core complex of photosystem II (PSII). PSII is a light-driven water:plastoquinone oxidoreductase that uses light energy to abstract electrons from H(2)O, generating O(2) and a proton gradient subsequently used for ATP formation. It consists of a core antenna complex that captures photons, and an electron transfer chain that converts photonic excitation into a charge separation. This Cyanophora paradoxa protein is Photosystem II reaction center protein K.